The following is a 362-amino-acid chain: Histidinol-phosphate aminotransferase (362 aa).

Lys-211 bears the N6-(pyridoxal phosphate)lysine mark.

The protein belongs to the class-II pyridoxal-phosphate-dependent aminotransferase family. Histidinol-phosphate aminotransferase subfamily. As to quaternary structure, homodimer. Pyridoxal 5'-phosphate serves as cofactor.

The catalysed reaction is L-histidinol phosphate + 2-oxoglutarate = 3-(imidazol-4-yl)-2-oxopropyl phosphate + L-glutamate. Its pathway is amino-acid biosynthesis; L-histidine biosynthesis; L-histidine from 5-phospho-alpha-D-ribose 1-diphosphate: step 7/9. This Serratia proteamaculans (strain 568) protein is Histidinol-phosphate aminotransferase.